The chain runs to 141 residues: Protein archease (141 aa).

Ca(2+)-binding residues include aspartate 19 and aspartate 140.

This sequence belongs to the archease family.

Activates the tRNA-splicing ligase complex by facilitating the enzymatic turnover of catalytic subunit RtcB. Acts by promoting the guanylylation of RtcB, a key intermediate step in tRNA ligation. Can also alter the NTP specificity of RtcB such that ATP, dGTP or ITP is used efficiently. This is Protein archease from Thermoplasma acidophilum (strain ATCC 25905 / DSM 1728 / JCM 9062 / NBRC 15155 / AMRC-C165).